Reading from the N-terminus, the 587-residue chain is Aspartate--tRNA ligase (587 aa).

An L-aspartate-binding site is contributed by glutamate 173. The aspartate stretch occupies residues 197–200 (QTLK). Arginine 219 lines the L-aspartate pocket. Residues 219-221 (RDE) and glutamine 228 each bind ATP. An L-aspartate-binding site is contributed by histidine 446. Glutamate 480 is an ATP binding site. Arginine 487 contributes to the L-aspartate binding site. 532-535 (GLDR) lines the ATP pocket.

Belongs to the class-II aminoacyl-tRNA synthetase family. Type 1 subfamily. As to quaternary structure, homodimer.

It is found in the cytoplasm. It catalyses the reaction tRNA(Asp) + L-aspartate + ATP = L-aspartyl-tRNA(Asp) + AMP + diphosphate. Its function is as follows. Catalyzes the attachment of L-aspartate to tRNA(Asp) in a two-step reaction: L-aspartate is first activated by ATP to form Asp-AMP and then transferred to the acceptor end of tRNA(Asp). The protein is Aspartate--tRNA ligase of Bacteroides thetaiotaomicron (strain ATCC 29148 / DSM 2079 / JCM 5827 / CCUG 10774 / NCTC 10582 / VPI-5482 / E50).